Consider the following 911-residue polypeptide: Brevican core protein (911 aa).

Positions 1–22 are cleaved as a signal peptide; sequence MAQLFLPLLAALVLAQAPAALA. Residues 36-155 enclose the Ig-like V-type domain; it reads RVRIAGDAPL…SSDAVEVKVK (120 aa). Disulfide bonds link Cys57–Cys137, Cys179–Cys250, Cys203–Cys224, Cys277–Cys352, and Cys301–Cys322. N-linked (GlcNAc...) asparagine glycosylation occurs at Asn130. 2 Link domains span residues 157 to 252 and 257 to 354; these read VVFL…YCYA and GELF…YCFR. N-linked (GlcNAc...) asparagine glycosylation is present at Asn337. Residues 391–641 form a disordered region; it reads QLPQEATESE…PTDSASRGGV (251 aa). Phosphoserine is present on Ser418. Ser418 carries O-linked (Xyl...) (chondroitin sulfate) serine glycosylation. Residues 454 to 478 are compositionally biased toward acidic residues; it reads EEEEKYEDEEEKEEEEEEEEVEDEA. 2 O-glycosylated at two sites regions span residues 520-530 and 540-545; these read SPLPDGESEAS and TETLPT. The O-glycosylated at one site stretch occupies residues 569-575; that stretch reads TGGPELS. Over residues 612 to 627 the composition is skewed to polar residues; it reads EDNSGRTAPAGTSVQA. Ala646 is lipidated: GPI-anchor amidated alanine. One can recognise an EGF-like domain in the interval 646 to 682; sequence ASGDCVPSPCHNGGTCLEEEEGVRCLCLPGYGGDLCD. Disulfide bonds link Cys650/Cys661, Cys655/Cys670, Cys672/Cys681, Cys688/Cys699, Cys716/Cys808, Cys784/Cys800, Cys815/Cys858, and Cys844/Cys871. Residues 695 to 809 enclose the C-type lectin domain; sequence FQGACYKHFS…CNYHLSYTCK (115 aa). The 61-residue stretch at 813–873 folds into the Sushi domain; sequence VSCGPPPELP…WEAPQISCVP (61 aa). O-linked (GalNAc...) serine glycosylation is found at Ser905 and Ser906.

This sequence belongs to the aggrecan/versican proteoglycan family. Interacts with TNR. In terms of processing, O-glycosylated; contains chondroitin sulfate. O-glycosylated with a core 1 or possibly core 8 glycan. Expressed in the retina, specifically in the inner nuclear layer, inner plexiform layer and ganglion cell layer (at protein level). Detected in cerebrospinal fluid (at protein level). Detected in urine (at protein level).

Its subcellular location is the secreted. The protein resides in the extracellular space. The protein localises to the extracellular matrix. It is found in the membrane. In terms of biological role, may play a role in the terminally differentiating and the adult nervous system during postnatal development. Could stabilize interactions between hyaluronan (HA) and brain proteoglycans. The protein is Brevican core protein (BCAN) of Homo sapiens (Human).